Here is a 122-residue protein sequence, read N- to C-terminus: Large ribosomal subunit protein uL14c (122 aa).

The protein belongs to the universal ribosomal protein uL14 family. Part of the 50S ribosomal subunit.

It is found in the plastid. The protein resides in the chloroplast. Its function is as follows. Binds to 23S rRNA. In Chlamydomonas reinhardtii (Chlamydomonas smithii), this protein is Large ribosomal subunit protein uL14c.